Here is a 257-residue protein sequence, read N- to C-terminus: Acetylglutamate kinase (257 aa).

Residues 43–44, arginine 65, and asparagine 157 each bind substrate; that span reads GG. ATP contacts are provided by residues 180-185 and 208-210; these read DVSGIL and IIT.

This sequence belongs to the acetylglutamate kinase family. ArgB subfamily. In terms of assembly, homodimer.

It is found in the cytoplasm. The catalysed reaction is N-acetyl-L-glutamate + ATP = N-acetyl-L-glutamyl 5-phosphate + ADP. It functions in the pathway amino-acid biosynthesis; L-arginine biosynthesis; N(2)-acetyl-L-ornithine from L-glutamate: step 2/4. In terms of biological role, catalyzes the ATP-dependent phosphorylation of N-acetyl-L-glutamate. The protein is Acetylglutamate kinase of Salmonella paratyphi A (strain AKU_12601).